A 1222-amino-acid polypeptide reads, in one-letter code: Kinesin-related protein 9 (1222 aa).

Residues 1–25 (MDNNNNNFSTPKQPTINSTTGGQLR) are compositionally biased toward polar residues. Disordered stretches follow at residues 1 to 55 (MDNN…ITNS), 75 to 165 (MDSL…STNI), and 188 to 343 (SSNT…TQPL). The span at 26–55 (SRSNSSPSTSSISTPRNGSTTATTSSITNS) shows a compositional bias: low complexity. Positions 75–85 (MDSLSTPMSQS) are enriched in polar residues. Composition is skewed to low complexity over residues 122–165 (SFIS…STNI), 194–209 (SSLP…PLSN), 216–238 (NHHL…ISTT), and 254–325 (NLTT…RTPI). Positions 326-343 (QNFNSVGGVNITSKTQPL) are enriched in polar residues. A Kinesin motor domain is found at 350–719 (SIQAVCRFRP…LNFGQRAQSV (370 aa)). Residue 438 to 445 (GQTGAGKT) participates in ATP binding. Residues 724 to 1026 (LQNVEESHSE…DTLTNKLEIQ (303 aa)) are a coiled coil. A disordered region spans residues 1144–1174 (NINNNNNIKNNNNNNKLKSKKVGSSSSSSSN). The helical transmembrane segment at 1183-1203 (ILFFLIILVILFFLMVAVGLT) threads the bilayer.

It belongs to the TRAFAC class myosin-kinesin ATPase superfamily. Kinesin family.

Its subcellular location is the membrane. The protein resides in the cytoplasm. It localises to the cytoskeleton. Its function is as follows. Microtubule-associated force-producing protein that plays a role in organelle transport. Its motor activity is directed toward the microtubule's plus end. The polypeptide is Kinesin-related protein 9 (kif9) (Dictyostelium discoideum (Social amoeba)).